Here is a 1359-residue protein sequence, read N- to C-terminus: Regulatory-associated protein of TOR 2 (1359 aa).

2 disordered regions span residues 17-64 (SSAA…PQVA) and 782-819 (SDNS…QHSD). The span at 32–50 (HLVDDHLPVENGPDPRRDV) shows a compositional bias: basic and acidic residues. Polar residues predominate over residues 782 to 805 (SDNSATARDGRISTSSPIATNSIM). The segment covering 806 to 819 (HGSPQSDDSSQHSD) has biased composition (low complexity). 7 WD repeats span residues 1041–1080 (RFEL…PVNT), 1087–1127 (SDRG…GGQK), 1139–1178 (RSAG…VNTI), 1181–1221 (TADS…RLVY), 1228–1269 (PRSE…EPYL), 1273–1312 (AHRG…LTII), and 1321–1359 (QRIG…YQVR).

Belongs to the WD repeat RAPTOR family. The target of rapamycin complex 1 (TORC1) is composed of at least RAPTOR, LST8 and TOR.

Component of TORC1 complex, which is an essential cell growth regulator that controls plant development. Acts by recruiting substrates for TOR. Acts by activating transcription, protein synthesis and ribosome biogenesis, and inhibiting mRNA degradation and autophagy. The chain is Regulatory-associated protein of TOR 2 (RAPTOR2) from Oryza sativa subsp. japonica (Rice).